The primary structure comprises 363 residues: Pyrimidine monooxygenase RutA (363 aa).

Residues 49–50 (IK), Asn-115, Glu-124, 140–141 (RY), and Ser-190 contribute to the FMN site.

Belongs to the NtaA/SnaA/DszA monooxygenase family. RutA subfamily.

It carries out the reaction uracil + FMNH2 + NADH + O2 = (Z)-3-ureidoacrylate + FMN + NAD(+) + H2O + H(+). The catalysed reaction is thymine + FMNH2 + NADH + O2 = (Z)-2-methylureidoacrylate + FMN + NAD(+) + H2O + H(+). Functionally, catalyzes the pyrimidine ring opening between N-3 and C-4 by an unusual flavin hydroperoxide-catalyzed mechanism, adding oxygen atoms in the process to yield ureidoacrylate peracid, that immediately reacts with FMN forming ureidoacrylate and FMN-N(5)-oxide. The FMN-N(5)-oxide reacts spontaneously with NADH to produce FMN. Requires the flavin reductase RutF to regenerate FMN in vivo. The chain is Pyrimidine monooxygenase RutA from Klebsiella variicola (strain At-22).